Consider the following 478-residue polypeptide: Lysine histidine transporter-like 7 (478 aa).

Topologically, residues 1–63 (MSIALGNLFD…ITESRKGNVY (63 aa)) are cytoplasmic. Residues 15-45 (ESGGSPLFMSPAPSTDPQPISGEKNGGDGGR) form a disordered region. The chain crosses the membrane as a helical span at residues 64 to 86 (TATFHLLCSGIGLQVILLPAAFA). At 87-89 (ALG) the chain is on the extracellular side. A helical transmembrane segment spans residues 90–112 (WVWGTIILTVGFVWKLYTTWLLV). Over 113–140 (QLHEAVPGIRISRYVRLAIASFGVKLGK) the chain is Cytoplasmic. The helical transmembrane segment at 141–161 (LLGIFPVMYLSGGACTILVIT) threads the bilayer. Over 162–177 (GGKSIQQLLQIMSDDN) the chain is Extracellular. A helical transmembrane segment spans residues 178–198 (TAPLTSVQCFLVFSCIAMIMS). Topologically, residues 199-205 (QFPNLNS) are cytoplasmic. A helical transmembrane segment spans residues 206 to 226 (LFGVSLIGAFMGIAYCTVIWI). Topologically, residues 227-241 (LPVASDSQRTQVSVS) are extracellular. The chain crosses the membrane as a helical span at residues 242–262 (YATMDKSFVHIFNAIGLIALV). The Cytoplasmic segment spans residues 263–291 (YRGNNLVLEIQGTLPSDSKNPSCKTMWRA). The helical transmembrane segment at 292–312 (VMISHALVAICMFPLTFAVYW) threads the bilayer. Residues 313–340 (AYGDKIPATGGPVGNYLKLYTQEHSKRA) are Extracellular-facing. A helical transmembrane segment spans residues 341–361 (ACFIHLTFIFSCLCSYPINLM). Residues 362 to 379 (PACDNIEMVYITKKKKPA) are Cytoplasmic-facing. A helical membrane pass occupies residues 380 to 402 (SIIVRMMLRVFLSLVCFTIAVGF). Residues 403-406 (PFLP) lie on the Extracellular side of the membrane. The helical transmembrane segment at 407-429 (YLAVLIGAIALLVTFTYPCFMWI) threads the bilayer. Residues 430–439 (SIKKPQRKSP) are Cytoplasmic-facing. A helical membrane pass occupies residues 440–460 (MWLFNVLVGCLGASLSVLLLV). Over 461-478 (ASAMRLAQKGLHANFFRP) the chain is Extracellular.

This sequence belongs to the amino acid/polyamine transporter 2 family. Amino acid/auxin permease (AAAP) (TC 2.A.18.2) subfamily.

It localises to the cell membrane. Amino acid transporter. The polypeptide is Lysine histidine transporter-like 7 (Arabidopsis thaliana (Mouse-ear cress)).